Here is a 76-residue protein sequence, read N- to C-terminus: MENKLSFEEAISQLEHLVSKLEQGDVPLEEAISYFKEGMELSKLCDEKLKNVQEQMAVILGEDGELEPFTAVGDEA.

This sequence belongs to the XseB family. Heterooligomer composed of large and small subunits.

It localises to the cytoplasm. The catalysed reaction is Exonucleolytic cleavage in either 5'- to 3'- or 3'- to 5'-direction to yield nucleoside 5'-phosphates.. Functionally, bidirectionally degrades single-stranded DNA into large acid-insoluble oligonucleotides, which are then degraded further into small acid-soluble oligonucleotides. This chain is Exodeoxyribonuclease 7 small subunit, found in Bacillus cereus (strain G9842).